The following is a 181-amino-acid chain: Oligoribonuclease (181 aa).

The Exonuclease domain occupies 8-171; that stretch reads LIWIDLEMTG…DDIRESVAEL (164 aa). Residue Y129 is part of the active site.

It belongs to the oligoribonuclease family.

The protein resides in the cytoplasm. 3'-to-5' exoribonuclease specific for small oligoribonucleotides. The polypeptide is Oligoribonuclease (Yersinia enterocolitica serotype O:8 / biotype 1B (strain NCTC 13174 / 8081)).